The primary structure comprises 307 residues: Ribonuclease Z (307 aa).

The Zn(2+) site is built by His-63, His-65, Asp-67, His-68, His-141, Asp-208, and His-266. Asp-67 acts as the Proton acceptor in catalysis.

It belongs to the RNase Z family. As to quaternary structure, homodimer. Zn(2+) serves as cofactor.

It carries out the reaction Endonucleolytic cleavage of RNA, removing extra 3' nucleotides from tRNA precursor, generating 3' termini of tRNAs. A 3'-hydroxy group is left at the tRNA terminus and a 5'-phosphoryl group is left at the trailer molecule.. In terms of biological role, zinc phosphodiesterase, which displays some tRNA 3'-processing endonuclease activity. Probably involved in tRNA maturation, by removing a 3'-trailer from precursor tRNA. The chain is Ribonuclease Z from Chlamydia pneumoniae (Chlamydophila pneumoniae).